We begin with the raw amino-acid sequence, 605 residues long: Elongation factor 4 (605 aa).

Residues 11–193 (KCIRNFSIIA…QIVTRISPPQ (183 aa)) enclose the tr-type G domain. GTP is bound by residues 23-28 (DHGKST) and 140-143 (NKVD).

It belongs to the TRAFAC class translation factor GTPase superfamily. Classic translation factor GTPase family. LepA subfamily.

It is found in the cell membrane. It catalyses the reaction GTP + H2O = GDP + phosphate + H(+). Functionally, required for accurate and efficient protein synthesis under certain stress conditions. May act as a fidelity factor of the translation reaction, by catalyzing a one-codon backward translocation of tRNAs on improperly translocated ribosomes. Back-translocation proceeds from a post-translocation (POST) complex to a pre-translocation (PRE) complex, thus giving elongation factor G a second chance to translocate the tRNAs correctly. Binds to ribosomes in a GTP-dependent manner. This Aster yellows witches'-broom phytoplasma (strain AYWB) protein is Elongation factor 4.